We begin with the raw amino-acid sequence, 572 residues long: Enolase 4 (572 aa).

Positions 181–204 are disordered; the sequence is IEPVPSPVTSPALGKKKGSGKGKK. Over residues 194–204 the composition is skewed to basic residues; that stretch reads GKKKGSGKGKK. Position 288 (E288) interacts with substrate. The Proton acceptor role is filled by K468. K519 serves as a coordination point for substrate.

This sequence belongs to the enolase family.

It carries out the reaction (2R)-2-phosphoglycerate = phosphoenolpyruvate + H2O. It functions in the pathway carbohydrate degradation; glycolysis; pyruvate from D-glyceraldehyde 3-phosphate: step 4/5. The polypeptide is Enolase 4 (eno4) (Xenopus laevis (African clawed frog)).